The following is a 184-amino-acid chain: C-phycoerythrin beta chain (184 aa).

(2R,3E)-phycoerythrobilin-binding residues include cysteine 48 and cysteine 59. N4-methylasparagine is present on asparagine 70. (2R,3E)-phycoerythrobilin-binding residues include cysteine 80 and cysteine 165.

It belongs to the phycobiliprotein family. As to quaternary structure, heterodimer of an alpha and a beta chain. In terms of processing, contains three covalently linked bilin chromophores.

The protein resides in the cellular thylakoid membrane. Its function is as follows. Light-harvesting photosynthetic bile pigment-protein from the phycobiliprotein complex. The sequence is that of C-phycoerythrin beta chain (cpeB) from Microchaete diplosiphon (Fremyella diplosiphon).